Here is a 456-residue protein sequence, read N- to C-terminus: Glycerol-3-phosphate acyltransferase 4 (456 aa).

Residues 1 to 37 (MFLLLPFDSLIVNLLGISLTVLFTLLLVFIIVPAIFG) form the signal peptide. Helical transmembrane passes span 156–176 (ISLR…CFLL) and 180–200 (IALA…VGYL). Asparagine 247 carries an N-linked (GlcNAc...) asparagine glycan. The short motif at 248–253 (HTSPID) is the HXXXXD motif element. Residues asparagine 327, asparagine 328, and asparagine 362 are each glycosylated (N-linked (GlcNAc...) asparagine).

The protein belongs to the 1-acyl-sn-glycerol-3-phosphate acyltransferase family.

It is found in the endoplasmic reticulum membrane. The enzyme catalyses sn-glycerol 3-phosphate + an acyl-CoA = a 1-acyl-sn-glycero-3-phosphate + CoA. It carries out the reaction dodecanoyl-CoA + sn-glycerol 3-phosphate = 1-dodecanoyl-sn-glycerol 3-phosphate + CoA. The catalysed reaction is sn-glycerol 3-phosphate + hexadecanoyl-CoA = 1-hexadecanoyl-sn-glycero-3-phosphate + CoA. It catalyses the reaction sn-glycerol 3-phosphate + octadecanoyl-CoA = 1-octadecanoyl-sn-glycero-3-phosphate + CoA. The enzyme catalyses sn-glycerol 3-phosphate + (9Z)-octadecenoyl-CoA = 1-(9Z-octadecenoyl)-sn-glycero-3-phosphate + CoA. It carries out the reaction (9Z,12Z)-octadecadienoyl-CoA + sn-glycerol 3-phosphate = 1-(9Z,12Z)-octadecadienoyl-sn-glycero-3-phosphate + CoA. It functions in the pathway phospholipid metabolism; CDP-diacylglycerol biosynthesis; CDP-diacylglycerol from sn-glycerol 3-phosphate: step 1/3. In terms of biological role, converts glycerol-3-phosphate to 1-acyl-sn-glycerol-3-phosphate (lysophosphatidic acid or LPA) by incorporating an acyl moiety at the sn-1 position of the glycerol backbone. Active against both saturated and unsaturated long-chain fatty acyl-CoAs. Protects cells against lipotoxicity. The chain is Glycerol-3-phosphate acyltransferase 4 from Pongo abelii (Sumatran orangutan).